The sequence spans 375 residues: Homoserine O-succinyltransferase (375 aa).

An AB hydrolase-1 domain is found at 48–358 (NAVLVCHALS…DAGHDSFLLD (311 aa)). The active-site Nucleophile is serine 154. Substrate is bound at residue arginine 224. Residues aspartate 319 and histidine 352 contribute to the active site. Aspartate 353 serves as a coordination point for substrate.

It belongs to the AB hydrolase superfamily. MetX family. As to quaternary structure, homodimer.

The protein localises to the cytoplasm. It carries out the reaction L-homoserine + succinyl-CoA = O-succinyl-L-homoserine + CoA. It participates in amino-acid biosynthesis; L-methionine biosynthesis via de novo pathway; O-succinyl-L-homoserine from L-homoserine: step 1/1. Transfers a succinyl group from succinyl-CoA to L-homoserine, forming succinyl-L-homoserine. This is Homoserine O-succinyltransferase from Aromatoleum aromaticum (strain DSM 19018 / LMG 30748 / EbN1) (Azoarcus sp. (strain EbN1)).